Reading from the N-terminus, the 318-residue chain is Aspartate carbamoyltransferase catalytic subunit (318 aa).

Residues R54 and T55 each contribute to the carbamoyl phosphate site. K82 is an L-aspartate binding site. Carbamoyl phosphate-binding residues include R104, H134, and Q137. L-aspartate contacts are provided by R174 and R230. Carbamoyl phosphate is bound by residues G271 and P272.

Belongs to the aspartate/ornithine carbamoyltransferase superfamily. ATCase family. Heterododecamer (2C3:3R2) of six catalytic PyrB chains organized as two trimers (C3), and six regulatory PyrI chains organized as three dimers (R2).

The enzyme catalyses carbamoyl phosphate + L-aspartate = N-carbamoyl-L-aspartate + phosphate + H(+). It participates in pyrimidine metabolism; UMP biosynthesis via de novo pathway; (S)-dihydroorotate from bicarbonate: step 2/3. In terms of biological role, catalyzes the condensation of carbamoyl phosphate and aspartate to form carbamoyl aspartate and inorganic phosphate, the committed step in the de novo pyrimidine nucleotide biosynthesis pathway. In Clavibacter sepedonicus (Clavibacter michiganensis subsp. sepedonicus), this protein is Aspartate carbamoyltransferase catalytic subunit.